Consider the following 955-residue polypeptide: UvrABC system protein A (955 aa).

Gly35–Ser42 contributes to the ATP binding site. 2 ABC transporter domains span residues Trp322–Ile601 and Gly621–Lys951. Gly654–Ser661 is a binding site for ATP. The segment at Cys754 to Cys780 adopts a C4-type zinc-finger fold.

The protein belongs to the ABC transporter superfamily. UvrA family. Forms a heterotetramer with UvrB during the search for lesions.

Its subcellular location is the cytoplasm. In terms of biological role, the UvrABC repair system catalyzes the recognition and processing of DNA lesions. UvrA is an ATPase and a DNA-binding protein. A damage recognition complex composed of 2 UvrA and 2 UvrB subunits scans DNA for abnormalities. When the presence of a lesion has been verified by UvrB, the UvrA molecules dissociate. This chain is UvrABC system protein A, found in Rickettsia felis (strain ATCC VR-1525 / URRWXCal2) (Rickettsia azadi).